Reading from the N-terminus, the 148-residue chain is Large-conductance mechanosensitive channel (148 aa).

2 helical membrane-spanning segments follow: residues A9–F29 and I79–I99.

This sequence belongs to the MscL family. In terms of assembly, homopentamer.

Its subcellular location is the cell inner membrane. Functionally, channel that opens in response to stretch forces in the membrane lipid bilayer. May participate in the regulation of osmotic pressure changes within the cell. This Pseudomonas syringae pv. syringae (strain B728a) protein is Large-conductance mechanosensitive channel.